Here is a 211-residue protein sequence, read N- to C-terminus: MTKPLTIAVPKGRILKDLIPLVRRAGLDSTPLEENDRRLVRPTADGAFRYVFLKPDDVPTYVEYGAADLGVSGRDTLLERRHDLYTPLDLGIGRCRLVVAGPEDTEVPDLPRVATKYPRIAGDHFASKGVVAEIIPVHGSVELAPLVGLSHLIVDIVETGSTLRENRLEVLETVTEVSTQLIANRASYKLRSDVIRPLVERLRAATAGAGR.

It belongs to the ATP phosphoribosyltransferase family. Short subfamily. As to quaternary structure, heteromultimer composed of HisG and HisZ subunits.

It is found in the cytoplasm. The catalysed reaction is 1-(5-phospho-beta-D-ribosyl)-ATP + diphosphate = 5-phospho-alpha-D-ribose 1-diphosphate + ATP. The protein operates within amino-acid biosynthesis; L-histidine biosynthesis; L-histidine from 5-phospho-alpha-D-ribose 1-diphosphate: step 1/9. Its function is as follows. Catalyzes the condensation of ATP and 5-phosphoribose 1-diphosphate to form N'-(5'-phosphoribosyl)-ATP (PR-ATP). Has a crucial role in the pathway because the rate of histidine biosynthesis seems to be controlled primarily by regulation of HisG enzymatic activity. This Sorangium cellulosum (strain So ce56) (Polyangium cellulosum (strain So ce56)) protein is ATP phosphoribosyltransferase.